The chain runs to 426 residues: Zona pellucida sperm-binding protein 3 (426 aa).

An N-terminal signal peptide occupies residues 1–22 (MGLSYGIFICFLLLGGMELCCP). Gln23 bears the Pyrrolidone carboxylic acid mark. Over 23–385 (QTIWPTETYY…IEGSTSPHTS (363 aa)) the chain is Extracellular. The ZP domain maps to 43 to 305 (DCLESQLVVT…KACSFIKSTK (263 aa)). 2 disulfides stabilise this stretch: Cys44–Cys138 and Cys76–Cys97. N-linked (GlcNAc...) asparagine glycosylation is found at Asn123 and Asn145. Thr154, Thr160, and Thr161 each carry an O-linked (GalNAc...) threonine glycan. Cystine bridges form between Cys215–Cys280 and Cys237–Cys298. Residue Asn244 is glycosylated (N-linked (GlcNAc...) asparagine). Residues 351-426 (RRHVTEEAEI…PVICPASVSQ (76 aa)) constitute a propeptide, removed in mature form. Residues 386–406 (VMLGLGLATVVSLTLATIVLV) form a helical membrane-spanning segment. The Cytoplasmic portion of the chain corresponds to 407 to 426 (LAKRHRTASHPVICPASVSQ).

This sequence belongs to the ZP domain family. ZPC subfamily. In terms of assembly, polymers of ZP2 and ZP3 organized into long filaments cross-linked by ZP1 homodimers. Interacts with ZP1 and ZP2. In terms of processing, proteolytically cleaved before the transmembrane segment to yield the secreted ectodomain incorporated in the zona pellucida. Post-translationally, N-glycosylated. O-glycosylated; removal of O-linked glycans may play an important role in the post-fertilization block to polyspermy. Expressed in oocytes.

Its subcellular location is the zona pellucida. The protein localises to the cell membrane. Component of the zona pellucida, an extracellular matrix surrounding oocytes which mediates sperm binding, induction of the acrosome reaction and prevents post-fertilization polyspermy. The zona pellucida is composed of 3 to 4 glycoproteins, ZP1, ZP2, ZP3, and ZP4. ZP3 is essential for sperm binding and zona matrix formation. The protein is Zona pellucida sperm-binding protein 3 (ZP3) of Canis lupus familiaris (Dog).